The following is a 663-amino-acid chain: UvrABC system protein B (663 aa).

Positions 31-188 constitute a Helicase ATP-binding domain; that stretch reads DNIEGGEKAQ…NDLVDIQFER (158 aa). Position 44 to 51 (44 to 51) interacts with ATP; sequence GATGTGKT. The short motif at 97 to 120 is the Beta-hairpin element; sequence YYDYYQPEAYVPSSDTYIEKDSSV. The 167-residue stretch at 435-601 folds into the Helicase C-terminal domain; that stretch reads QMDDLLGEIN…TIKKDIRDLI (167 aa). Residues 627-662 enclose the UVR domain; it reads QEAIKKLQKQMQEAAELLDFELAAQIRDMVLELKAM.

This sequence belongs to the UvrB family. Forms a heterotetramer with UvrA during the search for lesions. Interacts with UvrC in an incision complex.

The protein resides in the cytoplasm. In terms of biological role, the UvrABC repair system catalyzes the recognition and processing of DNA lesions. A damage recognition complex composed of 2 UvrA and 2 UvrB subunits scans DNA for abnormalities. Upon binding of the UvrA(2)B(2) complex to a putative damaged site, the DNA wraps around one UvrB monomer. DNA wrap is dependent on ATP binding by UvrB and probably causes local melting of the DNA helix, facilitating insertion of UvrB beta-hairpin between the DNA strands. Then UvrB probes one DNA strand for the presence of a lesion. If a lesion is found the UvrA subunits dissociate and the UvrB-DNA preincision complex is formed. This complex is subsequently bound by UvrC and the second UvrB is released. If no lesion is found, the DNA wraps around the other UvrB subunit that will check the other stand for damage. The chain is UvrABC system protein B from Streptococcus mutans serotype c (strain ATCC 700610 / UA159).